Here is a 109-residue protein sequence, read N- to C-terminus: Flagellar hook-basal body complex protein FliE (109 aa).

Positions 1 to 38 (MQAIHNDKSLLSPFSELNTDNRTKREESGSTFKEQKGG) are disordered. Residues 19 to 38 (TDNRTKREESGSTFKEQKGG) show a composition bias toward basic and acidic residues.

The protein belongs to the FliE family.

It localises to the bacterial flagellum basal body. In Helicobacter pylori (strain P12), this protein is Flagellar hook-basal body complex protein FliE.